Reading from the N-terminus, the 448-residue chain is Arginine synthetase ArcE (448 aa).

Probably forms homotetramers and higher assemblies of tetramers. Mg(2+) is required as a cofactor.

It catalyses the reaction L-arginine + ADP + phosphate + H(+) = L-citrulline + NH4(+) + ATP. It functions in the pathway amino-acid biosynthesis; L-proline biosynthesis. It participates in amino-acid degradation; L-arginine degradation. The protein operates within amino-acid biosynthesis; L-arginine biosynthesis. Its function is as follows. Arginine deiminase involved in an arginine synthetase pathway, which provides citrulline and ornithine, the precursors for proline biosynthesis. Catalyzes the conversion of L-arginine to citrulline while conserving the energy of arginine deimination to generate ATP from ADP and free phosphate. Is specific toward L-arginine and cannot use D-arginine, agmatine, guanidine, L-alanine-L-arginine dipeptide and L-arginine-L-alanine dipeptide. Can also use CDP, GDP or UDP, with lower activity (38%, 8.4% and 13.3%, respectively). The enzyme can also catalyze the reverse reaction: the ATP-dependent generation of arginine from citrulline in a single reaction by using free ammonia, without the requirement of aspartic acid. In vivo, most likely functions in the arginine catabolism to produce citrulline for proline biosynthesis while also generating ATP, but it can also contribute to arginine biosynthesis when the necessary precursors such as citrulline are abundant. This is Arginine synthetase ArcE from Thermococcus kodakarensis (strain ATCC BAA-918 / JCM 12380 / KOD1) (Pyrococcus kodakaraensis (strain KOD1)).